A 136-amino-acid polypeptide reads, in one-letter code: ATP synthase epsilon chain (136 aa).

The interval 112-136 is disordered; sequence GNSADKLKAKESLNKARARSQAVGE. Positions 116-125 are enriched in basic and acidic residues; it reads DKLKAKESLN.

Belongs to the ATPase epsilon chain family. As to quaternary structure, F-type ATPases have 2 components, CF(1) - the catalytic core - and CF(0) - the membrane proton channel. CF(1) has five subunits: alpha(3), beta(3), gamma(1), delta(1), epsilon(1). CF(0) has three main subunits: a, b and c.

Its subcellular location is the cellular thylakoid membrane. Functionally, produces ATP from ADP in the presence of a proton gradient across the membrane. This is ATP synthase epsilon chain from Prochlorococcus marinus (strain SARG / CCMP1375 / SS120).